Consider the following 511-residue polypeptide: DEP domain-containing protein 7 (511 aa).

The DEP domain occupies 46–136 (LQTQVEVKKR…SSCSLYRFTT (91 aa)).

This sequence belongs to the DEPDC7 family. As to expression, expressed in liver.

The sequence is that of DEP domain-containing protein 7 (DEPDC7) from Homo sapiens (Human).